A 273-amino-acid polypeptide reads, in one-letter code: Ribosomal RNA small subunit methyltransferase A (273 aa).

S-adenosyl-L-methionine-binding residues include Asn18, Leu20, Gly45, Glu66, Asp91, and Asn113.

The protein belongs to the class I-like SAM-binding methyltransferase superfamily. rRNA adenine N(6)-methyltransferase family. RsmA subfamily.

It is found in the cytoplasm. It carries out the reaction adenosine(1518)/adenosine(1519) in 16S rRNA + 4 S-adenosyl-L-methionine = N(6)-dimethyladenosine(1518)/N(6)-dimethyladenosine(1519) in 16S rRNA + 4 S-adenosyl-L-homocysteine + 4 H(+). Specifically dimethylates two adjacent adenosines (A1518 and A1519) in the loop of a conserved hairpin near the 3'-end of 16S rRNA in the 30S particle. May play a critical role in biogenesis of 30S subunits. The polypeptide is Ribosomal RNA small subunit methyltransferase A (Escherichia coli O157:H7).